The primary structure comprises 530 residues: Lysine--tRNA ligase (530 aa).

The 'HIGH' region motif lies at 28–36; that stretch reads PSGHIHVGN. Residues 278 to 282 carry the 'KMSKS' region motif; sequence PMSSS.

The protein belongs to the class-I aminoacyl-tRNA synthetase family.

The protein resides in the cytoplasm. It catalyses the reaction tRNA(Lys) + L-lysine + ATP = L-lysyl-tRNA(Lys) + AMP + diphosphate. This Methanocaldococcus jannaschii (strain ATCC 43067 / DSM 2661 / JAL-1 / JCM 10045 / NBRC 100440) (Methanococcus jannaschii) protein is Lysine--tRNA ligase (lysS).